Reading from the N-terminus, the 88-residue chain is Small ribosomal subunit protein uS15 (88 aa).

This sequence belongs to the universal ribosomal protein uS15 family. As to quaternary structure, part of the 30S ribosomal subunit. Forms a bridge to the 50S subunit in the 70S ribosome, contacting the 23S rRNA.

In terms of biological role, one of the primary rRNA binding proteins, it binds directly to 16S rRNA where it helps nucleate assembly of the platform of the 30S subunit by binding and bridging several RNA helices of the 16S rRNA. Functionally, forms an intersubunit bridge (bridge B4) with the 23S rRNA of the 50S subunit in the ribosome. This is Small ribosomal subunit protein uS15 from Psychrobacter arcticus (strain DSM 17307 / VKM B-2377 / 273-4).